The sequence spans 325 residues: Serpentine receptor class delta-59 (325 aa).

8 consecutive transmembrane segments (helical) span residues 14–34, 45–65, 75–95, 97–117, 132–152, 190–210, 235–255, and 275–295; these read WYWP…LHLI, LKIF…FAFL, ISAA…TCFI, YHVF…TVLF, TYIM…IPFT, FLSA…GCLI, TLIH…IPSF, and ILVS…YFIV.

The protein belongs to the nematode receptor-like protein srd family.

The protein localises to the membrane. In Caenorhabditis elegans, this protein is Serpentine receptor class delta-59 (srd-59).